The following is a 145-amino-acid chain: tRNA-specific adenosine deaminase (145 aa).

The 116-residue stretch at 1 to 116 folds into the CMP/dCMP-type deaminase domain; that stretch reads MREALKQAEI…SNLRYFNSKA (116 aa). Zn(2+) is bound at residue His-48. The active-site Proton donor is Glu-50. Zn(2+)-binding residues include Cys-78 and Cys-81.

It belongs to the cytidine and deoxycytidylate deaminase family. In terms of assembly, homodimer. Zn(2+) serves as cofactor.

The enzyme catalyses adenosine(34) in tRNA + H2O + H(+) = inosine(34) in tRNA + NH4(+). Its function is as follows. Catalyzes the deamination of adenosine to inosine at the wobble position 34 of tRNA(Arg2). This Rickettsia bellii (strain RML369-C) protein is tRNA-specific adenosine deaminase.